The primary structure comprises 449 residues: D-inositol 3-phosphate glycosyltransferase (449 aa).

Histidine 43 lines the 1D-myo-inositol 3-phosphate pocket. UDP-N-acetyl-alpha-D-glucosamine contacts are provided by residues 49–50 and glycine 57; that span reads QP. 1D-myo-inositol 3-phosphate-binding positions include 54–59, lysine 112, tyrosine 145, threonine 169, and arginine 189; that span reads DAGGMN. Positions 263, 268, and 324 each coordinate UDP-N-acetyl-alpha-D-glucosamine. Positions 333, 334, and 336 each coordinate Mg(2+). Positions 346 and 354 each coordinate UDP-N-acetyl-alpha-D-glucosamine. Threonine 360 lines the Mg(2+) pocket.

It belongs to the glycosyltransferase group 1 family. MshA subfamily. Homodimer.

The catalysed reaction is 1D-myo-inositol 3-phosphate + UDP-N-acetyl-alpha-D-glucosamine = 1D-myo-inositol 2-acetamido-2-deoxy-alpha-D-glucopyranoside 3-phosphate + UDP + H(+). Functionally, catalyzes the transfer of a N-acetyl-glucosamine moiety to 1D-myo-inositol 3-phosphate to produce 1D-myo-inositol 2-acetamido-2-deoxy-glucopyranoside 3-phosphate in the mycothiol biosynthesis pathway. This is D-inositol 3-phosphate glycosyltransferase from Segniliparus rotundus (strain ATCC BAA-972 / CDC 1076 / CIP 108378 / DSM 44985 / JCM 13578).